A 532-amino-acid polypeptide reads, in one-letter code: Eukaryotic translation initiation factor 3 subunit D (532 aa).

Residues 108 to 161 form a disordered region; sequence ATVLKTRGGAPRGGSFAGRGGSQRGGRFQNQPGRGPVGGQRGPNPRFGKSKFGW. A compositionally biased stretch (gly residues) spans 117 to 131; it reads APRGGSFAGRGGSQR. The segment covering 132–141 has biased composition (low complexity); that stretch reads GGRFQNQPGR. The segment at 296–310 is RNA gate; it reads PLDFITVDENAADPP.

This sequence belongs to the eIF-3 subunit D family. Component of the eukaryotic translation initiation factor 3 (eIF-3) complex.

The protein resides in the cytoplasm. MRNA cap-binding component of the eukaryotic translation initiation factor 3 (eIF-3) complex, which is involved in protein synthesis of a specialized repertoire of mRNAs and, together with other initiation factors, stimulates binding of mRNA and methionyl-tRNAi to the 40S ribosome. The eIF-3 complex specifically targets and initiates translation of a subset of mRNAs involved in cell proliferation. In the eIF-3 complex, eif3d specifically recognizes and binds the 7-methylguanosine cap of a subset of mRNAs. The sequence is that of Eukaryotic translation initiation factor 3 subunit D from Yarrowia lipolytica (strain CLIB 122 / E 150) (Yeast).